The following is a 507-amino-acid chain: GMP synthase [glutamine-hydrolyzing] 1 (507 aa).

Residues 4–193 (KIIILDFGSQ…VVDVCGCKQD (190 aa)) form the Glutamine amidotransferase type-1 domain. Residue cysteine 79 is the Nucleophile of the active site. Residues histidine 167 and glutamate 169 contribute to the active site. One can recognise a GMPS ATP-PPase domain in the interval 194 to 382 (WSPASFIEST…LGMPEHLITR (189 aa)). An ATP-binding site is contributed by 221-227 (SGGVDSS).

In terms of assembly, homodimer.

The enzyme catalyses XMP + L-glutamine + ATP + H2O = GMP + L-glutamate + AMP + diphosphate + 2 H(+). It functions in the pathway purine metabolism; GMP biosynthesis; GMP from XMP (L-Gln route): step 1/1. Its function is as follows. Catalyzes the synthesis of GMP from XMP. This chain is GMP synthase [glutamine-hydrolyzing] 1 (guaA1), found in Bacteroides thetaiotaomicron (strain ATCC 29148 / DSM 2079 / JCM 5827 / CCUG 10774 / NCTC 10582 / VPI-5482 / E50).